The sequence spans 376 residues: UDP-N-acetylglucosamine 2-epimerase (376 aa).

Residues Arg-10, Lys-15, Asp-95, Glu-117, His-213, Gln-271, Phe-276, 290–292, Glu-296, and Arg-313 contribute to the substrate site; that span reads SGG.

The protein belongs to the UDP-N-acetylglucosamine 2-epimerase family. As to quaternary structure, homodimer.

It localises to the cytoplasm. It catalyses the reaction UDP-N-acetyl-alpha-D-glucosamine = UDP-N-acetyl-alpha-D-mannosamine. Its pathway is bacterial outer membrane biogenesis; enterobacterial common antigen biosynthesis. Functionally, catalyzes the reversible epimerization at C-2 of UDP-N-acetylglucosamine (UDP-GlcNAc) and thereby provides bacteria with UDP-N-acetylmannosamine (UDP-ManNAc), the activated donor of ManNAc residues. The sequence is that of UDP-N-acetylglucosamine 2-epimerase from Yersinia pestis.